Here is a 342-residue protein sequence, read N- to C-terminus: Protein BMEI1586 (342 aa).

Ser90 acts as the Proton acceptor in catalysis. Substrate is bound by residues 91 to 92 (GS), Asp251, and 256 to 257 (GT).

It belongs to the proline racemase family. In terms of assembly, homotetramer.

The enzyme catalyses trans-4-hydroxy-L-proline = cis-4-hydroxy-D-proline. In vitro, catalyzes the epimerization of trans-4-hydroxy-L-proline (t4LHyp) to cis-4-hydroxy-D-proline (c4DHyp) and that of trans-3-hydroxy-L-proline (t3LHyp) to cis-3-hydroxy-D-proline (c3DHyp), albeit with very low efficiency. The physiological substrate may be different. Displays neither proline racemase activity nor t3LHyp dehydratase activity. The sequence is that of Protein BMEI1586 from Brucella melitensis biotype 1 (strain ATCC 23456 / CCUG 17765 / NCTC 10094 / 16M).